The following is a 209-amino-acid chain: Kynurenine formamidase (209 aa).

Position 18 (tryptophan 18) interacts with substrate. Zn(2+)-binding residues include histidine 48, histidine 52, and aspartate 54. Catalysis depends on histidine 58, which acts as the Proton donor/acceptor. 2 residues coordinate Zn(2+): histidine 160 and glutamate 172.

The protein belongs to the Cyclase 1 superfamily. KynB family. Homodimer. It depends on Zn(2+) as a cofactor.

It carries out the reaction N-formyl-L-kynurenine + H2O = L-kynurenine + formate + H(+). The protein operates within amino-acid degradation; L-tryptophan degradation via kynurenine pathway; L-kynurenine from L-tryptophan: step 2/2. Its function is as follows. Catalyzes the hydrolysis of N-formyl-L-kynurenine to L-kynurenine, the second step in the kynurenine pathway of tryptophan degradation. This is Kynurenine formamidase from Sphingopyxis alaskensis (strain DSM 13593 / LMG 18877 / RB2256) (Sphingomonas alaskensis).